Here is a 258-residue protein sequence, read N- to C-terminus: Imidazole glycerol phosphate synthase subunit HisF (258 aa).

Active-site residues include D11 and D130.

This sequence belongs to the HisA/HisF family. In terms of assembly, heterodimer of HisH and HisF.

The protein localises to the cytoplasm. It carries out the reaction 5-[(5-phospho-1-deoxy-D-ribulos-1-ylimino)methylamino]-1-(5-phospho-beta-D-ribosyl)imidazole-4-carboxamide + L-glutamine = D-erythro-1-(imidazol-4-yl)glycerol 3-phosphate + 5-amino-1-(5-phospho-beta-D-ribosyl)imidazole-4-carboxamide + L-glutamate + H(+). It participates in amino-acid biosynthesis; L-histidine biosynthesis; L-histidine from 5-phospho-alpha-D-ribose 1-diphosphate: step 5/9. In terms of biological role, IGPS catalyzes the conversion of PRFAR and glutamine to IGP, AICAR and glutamate. The HisF subunit catalyzes the cyclization activity that produces IGP and AICAR from PRFAR using the ammonia provided by the HisH subunit. This is Imidazole glycerol phosphate synthase subunit HisF from Escherichia coli O17:K52:H18 (strain UMN026 / ExPEC).